The following is a 66-amino-acid chain: Cold shock protein 2 (66 aa).

The 60-residue stretch at 4–63 (GTVKWFNADKGFGFITGEDGTDVFVHFSAIQTDGFKTLDEGQKVTYDEEQGDRGPQATNV) folds into the CSD domain.

It localises to the cytoplasm. The chain is Cold shock protein 2 (cspL) from Lactiplantibacillus plantarum (strain ATCC BAA-793 / NCIMB 8826 / WCFS1) (Lactobacillus plantarum).